The sequence spans 385 residues: Cytochrome b (385 aa).

Helical transmembrane passes span 32–52 (MGSLLGLCLVIQILTGIFMAM), 76–98 (WLLRYTHANGASFFFAVMYMHMA), 113–133 (VWIIGVIIFVATMAAAFLGYC), and 179–199 (FFALHYLVPFIIAALVVMHFM). Residues histidine 82 and histidine 96 each coordinate heme b. Residues histidine 183 and histidine 197 each coordinate heme b. Position 202 (histidine 202) interacts with a ubiquinone. The next 4 helical transmembrane spans lie at 225-245 (FIFKDLITVFVFLIIFSLFVF), 289-309 (LLGVITMFGAILVLLVLPLTD), 321-341 (ISKLFFFLFVFNFILLGVLGS), and 348-368 (FVQMGQYATFLYFAYFLIFVP).

Belongs to the cytochrome b family. Fungal cytochrome b-c1 complex contains 10 subunits; 3 respiratory subunits, 2 core proteins and 5 low-molecular weight proteins. Cytochrome b-c1 complex is a homodimer. Heme b is required as a cofactor.

The protein localises to the mitochondrion inner membrane. Functionally, component of the ubiquinol-cytochrome c reductase complex (complex III or cytochrome b-c1 complex) that is part of the mitochondrial respiratory chain. The b-c1 complex mediates electron transfer from ubiquinol to cytochrome c. Contributes to the generation of a proton gradient across the mitochondrial membrane that is then used for ATP synthesis. In Monosporozyma servazzii (Yeast), this protein is Cytochrome b (COB).